We begin with the raw amino-acid sequence, 416 residues long: 4-hydroxy-3-methylbut-2-en-1-yl diphosphate synthase (flavodoxin) (416 aa).

Residues C304, C307, C350, and E357 each coordinate [4Fe-4S] cluster.

It belongs to the IspG family. [4Fe-4S] cluster serves as cofactor.

It carries out the reaction (2E)-4-hydroxy-3-methylbut-2-enyl diphosphate + oxidized [flavodoxin] + H2O + 2 H(+) = 2-C-methyl-D-erythritol 2,4-cyclic diphosphate + reduced [flavodoxin]. It functions in the pathway isoprenoid biosynthesis; isopentenyl diphosphate biosynthesis via DXP pathway; isopentenyl diphosphate from 1-deoxy-D-xylulose 5-phosphate: step 5/6. Functionally, converts 2C-methyl-D-erythritol 2,4-cyclodiphosphate (ME-2,4cPP) into 1-hydroxy-2-methyl-2-(E)-butenyl 4-diphosphate. This chain is 4-hydroxy-3-methylbut-2-en-1-yl diphosphate synthase (flavodoxin), found in Allorhizobium ampelinum (strain ATCC BAA-846 / DSM 112012 / S4) (Agrobacterium vitis (strain S4)).